We begin with the raw amino-acid sequence, 141 residues long: Transmembrane protein 216 (141 aa).

The next 4 membrane-spanning stretches (helical) occupy residues 15–35 (VLFF…LLIF), 49–69 (LVLD…RLFF), 82–102 (LGIS…YLLL), and 115–135 (SILL…LATF).

As to quaternary structure, part of the tectonic-like complex (also named B9 complex). Interacts with TMEM107.

It localises to the membrane. The protein localises to the cytoplasm. Its subcellular location is the cytoskeleton. It is found in the cilium basal body. In terms of biological role, part of the tectonic-like complex which is required for tissue-specific ciliogenesis and may regulate ciliary membrane composition. The chain is Transmembrane protein 216 (Tmem216) from Mus musculus (Mouse).